The chain runs to 213 residues: 3,4-dihydroxy-2-butanone 4-phosphate synthase (213 aa).

D-ribulose 5-phosphate is bound by residues 37–38 (RE), Asp-42, 150–154 (RPGHT), and Glu-174. Residue Glu-38 coordinates Mg(2+). A Mg(2+)-binding site is contributed by His-153.

It belongs to the DHBP synthase family. In terms of assembly, homodimer. Requires Mg(2+) as cofactor. It depends on Mn(2+) as a cofactor.

It catalyses the reaction D-ribulose 5-phosphate = (2S)-2-hydroxy-3-oxobutyl phosphate + formate + H(+). It participates in cofactor biosynthesis; riboflavin biosynthesis; 2-hydroxy-3-oxobutyl phosphate from D-ribulose 5-phosphate: step 1/1. Functionally, catalyzes the conversion of D-ribulose 5-phosphate to formate and 3,4-dihydroxy-2-butanone 4-phosphate. The protein is 3,4-dihydroxy-2-butanone 4-phosphate synthase of Clostridium botulinum (strain Langeland / NCTC 10281 / Type F).